The sequence spans 282 residues: Hydroxyethylthiazole kinase 2 (282 aa).

Residue Met44 coordinates substrate. Arg120 and Ser179 together coordinate ATP. Position 206 (Gly206) interacts with substrate.

Belongs to the Thz kinase family. Mg(2+) is required as a cofactor.

It catalyses the reaction 5-(2-hydroxyethyl)-4-methylthiazole + ATP = 4-methyl-5-(2-phosphooxyethyl)-thiazole + ADP + H(+). Its pathway is cofactor biosynthesis; thiamine diphosphate biosynthesis; 4-methyl-5-(2-phosphoethyl)-thiazole from 5-(2-hydroxyethyl)-4-methylthiazole: step 1/1. Catalyzes the phosphorylation of the hydroxyl group of 4-methyl-5-beta-hydroxyethylthiazole (THZ). The protein is Hydroxyethylthiazole kinase 2 of Methanosphaera stadtmanae (strain ATCC 43021 / DSM 3091 / JCM 11832 / MCB-3).